The sequence spans 316 residues: L-lactate dehydrogenase (316 aa).

Residues valine 15, aspartate 36, arginine 41, tyrosine 66, and glycine 80–alanine 81 each bind NAD(+). Substrate-binding positions include glutamine 83, arginine 90, and asparagine 122–aspartate 125. NAD(+) contacts are provided by residues alanine 120 to asparagine 122 and threonine 145. Aspartate 150–arginine 153 contributes to the substrate binding site. Beta-D-fructose 1,6-bisphosphate-binding residues include arginine 155 and histidine 170. The active-site Proton acceptor is the histidine 177. The residue at position 222 (tyrosine 222) is a Phosphotyrosine. Substrate is bound at residue threonine 231. Residues aspartate 287–threonine 316 are disordered. Positions glutamate 296–alanine 310 are enriched in basic and acidic residues.

It belongs to the LDH/MDH superfamily. LDH family. In terms of assembly, homotetramer.

It localises to the cytoplasm. The enzyme catalyses (S)-lactate + NAD(+) = pyruvate + NADH + H(+). Its pathway is fermentation; pyruvate fermentation to lactate; (S)-lactate from pyruvate: step 1/1. Its activity is regulated as follows. Allosterically activated by fructose 1,6-bisphosphate (FBP). Functionally, catalyzes the conversion of lactate to pyruvate. This chain is L-lactate dehydrogenase, found in Salinibacter ruber (strain DSM 13855 / M31).